The sequence spans 757 residues: UDP-N-acetylmuramoyl-L-alanyl-D-glutamate--2,6-diaminopimelate ligase MurE homolog, chloroplastic (757 aa).

Residues 1–11 (MATAPLAFHLP) are compositionally biased toward low complexity. The N-terminal 53 residues, 1-53 (MATAPLAFHLPFPFPSASRPPPRLLPPSRRPPAARLAATRRFRPPTADDEPPE), are a transit peptide targeting the chloroplast. Disordered stretches follow at residues 1 to 112 (MATA…DEFF), 126 to 152 (FTRRGLIKPSAPAPSQPEEEDGLADEL), and 172 to 195 (VSLADEEDEEANGGGGGVDYGDDG). Pro residues predominate over residues 12–30 (FPFPSASRPPPRLLPPSRR). Acidic residues-rich tracts occupy residues 47-56 (ADDEPPEAAE) and 142-152 (PEEEDGLADEL).

This sequence belongs to the MurCDEF family. MurE subfamily. In terms of assembly, component of the plastid-encoded plastid RNA polymerase (PEP) complex.

It localises to the plastid. Its subcellular location is the chloroplast. Required for the activity of the plastid-encoded RNA polymerase (PEP) and full expression of genes transcribed by PEP. This is UDP-N-acetylmuramoyl-L-alanyl-D-glutamate--2,6-diaminopimelate ligase MurE homolog, chloroplastic from Oryza sativa subsp. japonica (Rice).